The following is a 219-amino-acid chain: Cytidylate kinase (219 aa).

10–18 (GPAAAGKST) provides a ligand contact to ATP.

The protein belongs to the cytidylate kinase family. Type 1 subfamily.

Its subcellular location is the cytoplasm. It carries out the reaction CMP + ATP = CDP + ADP. The enzyme catalyses dCMP + ATP = dCDP + ADP. The polypeptide is Cytidylate kinase (Staphylococcus aureus (strain MRSA252)).